The following is a 148-amino-acid chain: SUMO-conjugating enzyme UBC9 (148 aa).

One can recognise a UBC core domain in the interval 1–147 (MASKRILKEL…ARTWTQKYAM (147 aa)). The Glycyl thioester intermediate role is filled by C85.

This sequence belongs to the ubiquitin-conjugating enzyme family. Interacts with CHIP. As to expression, highest expression in young stems and old leaves. Lowest levels in floral buds, anthers and young leaves.

The protein operates within protein modification; protein sumoylation. In terms of biological role, accepts the ubiquitin-like protein SUMO/SMT3 from the E1 complex and catalyzes its covalent attachment to other proteins. Mediates the selective degradation of short-lived and abnormal proteins. The sequence is that of SUMO-conjugating enzyme UBC9 (UBC9) from Arabidopsis thaliana (Mouse-ear cress).